We begin with the raw amino-acid sequence, 237 residues long: UDP-2,3-diacylglucosamine hydrolase (237 aa).

The Mn(2+) site is built by aspartate 8, histidine 10, aspartate 41, asparagine 78, and histidine 113. 78–79 (NR) contacts substrate. Positions 121, 159, 164, and 195 each coordinate substrate. Residues histidine 195 and histidine 197 each coordinate Mn(2+).

It belongs to the LpxH family. Mn(2+) serves as cofactor.

The protein localises to the cell inner membrane. It catalyses the reaction UDP-2-N,3-O-bis[(3R)-3-hydroxytetradecanoyl]-alpha-D-glucosamine + H2O = 2-N,3-O-bis[(3R)-3-hydroxytetradecanoyl]-alpha-D-glucosaminyl 1-phosphate + UMP + 2 H(+). Its pathway is glycolipid biosynthesis; lipid IV(A) biosynthesis; lipid IV(A) from (3R)-3-hydroxytetradecanoyl-[acyl-carrier-protein] and UDP-N-acetyl-alpha-D-glucosamine: step 4/6. Hydrolyzes the pyrophosphate bond of UDP-2,3-diacylglucosamine to yield 2,3-diacylglucosamine 1-phosphate (lipid X) and UMP by catalyzing the attack of water at the alpha-P atom. Involved in the biosynthesis of lipid A, a phosphorylated glycolipid that anchors the lipopolysaccharide to the outer membrane of the cell. This Chromobacterium violaceum (strain ATCC 12472 / DSM 30191 / JCM 1249 / CCUG 213 / NBRC 12614 / NCIMB 9131 / NCTC 9757 / MK) protein is UDP-2,3-diacylglucosamine hydrolase.